The chain runs to 702 residues: Flagellar operon control protein UmoB (702 aa).

5 consecutive transmembrane segments (helical) span residues 4–24 (SVII…FLFF), 204–224 (GFWN…ALMM), 227–247 (VFLP…LFLI), 343–363 (IIFV…QPLS), and 656–676 (GNTL…FFII).

The protein belongs to the IgaA family.

Its subcellular location is the cell inner membrane. Functionally, up-regulator of flagellar flhDC master operon. This Proteus mirabilis protein is Flagellar operon control protein UmoB (umoB).